The chain runs to 663 residues: MKHLVTTALAYTNGPLHLGHARSTYIPADIFTRYLRLKRENVFHVGGTDNHGVPITLKAEKEGVTPLDIVDRYHNAIKEDLDSLNVSFDSFGRTHSDIHIETAQEFYKTLKENGYIYEKEIEQFYCEKCSMSLADRYVEGKCPFCEGEARGDHCEVCGRHLEPTELLEPYCIHCNSKPEIKKSIHYFFKLSAMKEELTEYITNAKEMPEHVKNMALRWIEELHDWDVSRNLTWGVPIPKSNGQVMYVWIEAPIGYVSFTKELGEIWKDYWISKDVQSKITHFIGKDITVHHAVFWPGILKGVKNYKMPDSVVSGGYLTLENKKMSTSKNWVVWVKDFVEKFSPDYLRYFLMVNAPLNRDTDFSWDDFQKRINTELIDIIGNFSHRTLVFTERKFGKIPNVQKDTLKEEDLLLIRKCEKTTETFDKLIREYNFKDAIMEIILLSKEGNAYFQAMQPWAITDEERLKEVMYTCCTTLKYIVYLLSPFMPVKTGELLDLMNEELDLEIRGNDLKKPKVIFTKLEEMDILKMKEKLNSEIKFEEKVSKNEKTAKKTGAKMELIDIEYFTKVDLRVGKVLEVEDVKKSKKLYKIIVDLGNEQRQIISGLKGDYEVEELIGKNVIVICNLKPAKLCGVESEGMLLAAESDGIVSLLNIDREISLGSKIH.

Positions 10 to 20 match the 'HIGH' region motif; sequence AYTNGPLHLGH. Cys-142, Cys-145, Cys-154, and Cys-157 together coordinate Zn(2+). Positions 323 to 327 match the 'KMSKS' region motif; sequence KMSTS. ATP is bound at residue Thr-326. The 101-residue stretch at 563–663 folds into the tRNA-binding domain; it reads YFTKVDLRVG…REISLGSKIH (101 aa).

The protein belongs to the class-I aminoacyl-tRNA synthetase family. MetG type 1 subfamily. In terms of assembly, homodimer. Requires Zn(2+) as cofactor.

Its subcellular location is the cytoplasm. The catalysed reaction is tRNA(Met) + L-methionine + ATP = L-methionyl-tRNA(Met) + AMP + diphosphate. Functionally, is required not only for elongation of protein synthesis but also for the initiation of all mRNA translation through initiator tRNA(fMet) aminoacylation. The chain is Methionine--tRNA ligase from Methanococcus vannielii (strain ATCC 35089 / DSM 1224 / JCM 13029 / OCM 148 / SB).